We begin with the raw amino-acid sequence, 232 residues long: Clarin-2 (232 aa).

4 helical membrane passes run 8 to 28 (VWYGLASLLSFSSFLLIIVAL), 101 to 121 (ILLLLFLALALALVSMGFAIL), 139 to 159 (LWNVLAGGVVALAIGSFMAAV), and 188 to 208 (SFWICVASASAHAANLVVVAI).

The protein belongs to the clarin family. In terms of tissue distribution, detected in inner ear, particularly in hair bundles of auditory hair cells and is enriched in apical stereocilia. Detected in eye, but not in brain or muscle.

Its subcellular location is the cell projection. The protein resides in the stereocilium membrane. Its function is as follows. Plays a key role to hearing function. Required for normal organization and maintenance of the stereocilia bundle and for mechano-electrical transduction. This Mus musculus (Mouse) protein is Clarin-2.